The primary structure comprises 37 residues: Large ribosomal subunit protein bL36 (37 aa).

This sequence belongs to the bacterial ribosomal protein bL36 family.

The chain is Large ribosomal subunit protein bL36 from Streptomyces avermitilis (strain ATCC 31267 / DSM 46492 / JCM 5070 / NBRC 14893 / NCIMB 12804 / NRRL 8165 / MA-4680).